Here is a 347-residue protein sequence, read N- to C-terminus: Ribosomal RNA small subunit methyltransferase H (347 aa).

S-adenosyl-L-methionine-binding positions include 50–52, aspartate 69, phenylalanine 96, aspartate 125, and glutamine 132; that span reads GGH.

It belongs to the methyltransferase superfamily. RsmH family.

It localises to the cytoplasm. The enzyme catalyses cytidine(1402) in 16S rRNA + S-adenosyl-L-methionine = N(4)-methylcytidine(1402) in 16S rRNA + S-adenosyl-L-homocysteine + H(+). Functionally, specifically methylates the N4 position of cytidine in position 1402 (C1402) of 16S rRNA. This chain is Ribosomal RNA small subunit methyltransferase H, found in Corynebacterium aurimucosum (strain ATCC 700975 / DSM 44827 / CIP 107346 / CN-1) (Corynebacterium nigricans).